A 64-amino-acid chain; its full sequence is uncharacterized protein (64 aa).

This is an uncharacterized protein from Escherichia coli (strain K12).